Reading from the N-terminus, the 387-residue chain is MTVLKMSDLDLQGKRVLIREDLNVPVKDGVVTSDARILASLPTIKLALEKGAAVMVCSHLGRPTEGEFSAENSLKPVADYLSKALGREVPLVADYLGGVDVKAGDIVLFENVRFNKGEKKNADELAQQYAALCDVFVMDAFGTAHRAEGSTHGVAKFAKVAAAGPLLAAELDALGKALGAPAKPMAAIVAGSKVSTKLDVLNSLSQICDQLIVGGGIANTFLAAAGHPVGKSLYEPDLLDTARAIAAKVSVPLPVDVVVAKEFAESAEATVKLIADVAADDMILDIGPQTAANFAELLKSSKTILWNGPVGVFEFDQFGNGTKVLAEAIAESAAFSIAGGGDTLAAIDKYGVAEKISYISTGGGAFLEFVEGKVLPAVEVLESRAKA.

Residues 21-23 (DLN), arginine 36, 59-62 (HLGR), arginine 113, and arginine 146 contribute to the substrate site. ATP-binding positions include lysine 197, glutamate 314, and 340 to 343 (GGDT).

The protein belongs to the phosphoglycerate kinase family. In terms of assembly, monomer.

Its subcellular location is the cytoplasm. It carries out the reaction (2R)-3-phosphoglycerate + ATP = (2R)-3-phospho-glyceroyl phosphate + ADP. Its pathway is carbohydrate degradation; glycolysis; pyruvate from D-glyceraldehyde 3-phosphate: step 2/5. The chain is Phosphoglycerate kinase from Pseudomonas fluorescens (strain Pf0-1).